The primary structure comprises 257 residues: 7-carboxy-7-deazaguanine synthase (257 aa).

Residues 29-31 (LQG) and R44 each bind substrate. One can recognise a Radical SAM core domain in the interval 35-253 (LAGTPSVFVR…PRLHVALWND (219 aa)). [4Fe-4S] cluster is bound by residues C48, C52, and C55. Residue S57 coordinates Mg(2+). Position 90 (T90) interacts with substrate. G92 is a binding site for S-adenosyl-L-methionine. Residues 133-153 (VSPKLASSTPTAETDPKGDGE) are disordered.

The protein belongs to the radical SAM superfamily. 7-carboxy-7-deazaguanine synthase family. In terms of assembly, homodimer. The cofactor is [4Fe-4S] cluster. S-adenosyl-L-methionine serves as cofactor. Mg(2+) is required as a cofactor.

The catalysed reaction is 6-carboxy-5,6,7,8-tetrahydropterin + H(+) = 7-carboxy-7-deazaguanine + NH4(+). It participates in purine metabolism; 7-cyano-7-deazaguanine biosynthesis. Functionally, catalyzes the complex heterocyclic radical-mediated conversion of 6-carboxy-5,6,7,8-tetrahydropterin (CPH4) to 7-carboxy-7-deazaguanine (CDG), a step common to the biosynthetic pathways of all 7-deazapurine-containing compounds. This Halobacterium salinarum (strain ATCC 29341 / DSM 671 / R1) protein is 7-carboxy-7-deazaguanine synthase.